A 317-amino-acid chain; its full sequence is L-lactate dehydrogenase (317 aa).

Positions 16, 37, and 69 each coordinate NAD(+). Substrate contacts are provided by residues Gln-86, Arg-92, and Asn-124–Asp-127. Residues Ala-122–Asn-124 and Ser-147 each bind NAD(+). Asp-152–Arg-155 is a binding site for substrate. Residue His-179 is the Proton acceptor of the active site. Tyr-223 carries the post-translational modification Phosphotyrosine. Thr-232 contacts substrate.

The protein belongs to the LDH/MDH superfamily. LDH family. In terms of assembly, homotetramer.

It is found in the cytoplasm. It catalyses the reaction (S)-lactate + NAD(+) = pyruvate + NADH + H(+). The protein operates within fermentation; pyruvate fermentation to lactate; (S)-lactate from pyruvate: step 1/1. Catalyzes the conversion of lactate to pyruvate. This Mycoplasma capricolum subsp. capricolum (strain California kid / ATCC 27343 / NCTC 10154) protein is L-lactate dehydrogenase.